Reading from the N-terminus, the 1407-residue chain is DNA-directed RNA polymerase subunit beta' (1407 aa).

The Zn(2+) site is built by Cys-70, Cys-72, Cys-85, and Cys-88. 3 residues coordinate Mg(2+): Asp-460, Asp-462, and Asp-464. Residues Cys-814, Cys-888, Cys-895, and Cys-898 each coordinate Zn(2+).

The protein belongs to the RNA polymerase beta' chain family. In terms of assembly, the RNAP catalytic core consists of 2 alpha, 1 beta, 1 beta' and 1 omega subunit. When a sigma factor is associated with the core the holoenzyme is formed, which can initiate transcription. It depends on Mg(2+) as a cofactor. Zn(2+) serves as cofactor.

It catalyses the reaction RNA(n) + a ribonucleoside 5'-triphosphate = RNA(n+1) + diphosphate. Its function is as follows. DNA-dependent RNA polymerase catalyzes the transcription of DNA into RNA using the four ribonucleoside triphosphates as substrates. The polypeptide is DNA-directed RNA polymerase subunit beta' (Salmonella paratyphi A (strain ATCC 9150 / SARB42)).